Consider the following 329-residue polypeptide: Ketol-acid reductoisomerase (NADP(+)) (329 aa).

The KARI N-terminal Rossmann domain occupies 2–182 (TQLFYDTDAD…GGTRAGILET (181 aa)). NADP(+) contacts are provided by residues 25-28 (YGSQ), S51, S53, and 83-86 (DEFQ). Residue H108 is part of the active site. Position 134 (G134) interacts with NADP(+). Positions 183–328 (NFKEETETDL…KGLRSMFSWL (146 aa)) constitute a KARI C-terminal knotted domain. Mg(2+)-binding residues include D191, E195, E227, and E231. S252 contributes to the substrate binding site.

The protein belongs to the ketol-acid reductoisomerase family. It depends on Mg(2+) as a cofactor.

It catalyses the reaction (2R)-2,3-dihydroxy-3-methylbutanoate + NADP(+) = (2S)-2-acetolactate + NADPH + H(+). It carries out the reaction (2R,3R)-2,3-dihydroxy-3-methylpentanoate + NADP(+) = (S)-2-ethyl-2-hydroxy-3-oxobutanoate + NADPH + H(+). The protein operates within amino-acid biosynthesis; L-isoleucine biosynthesis; L-isoleucine from 2-oxobutanoate: step 2/4. It functions in the pathway amino-acid biosynthesis; L-valine biosynthesis; L-valine from pyruvate: step 2/4. Its function is as follows. Involved in the biosynthesis of branched-chain amino acids (BCAA). Catalyzes an alkyl-migration followed by a ketol-acid reduction of (S)-2-acetolactate (S2AL) to yield (R)-2,3-dihydroxy-isovalerate. In the isomerase reaction, S2AL is rearranged via a Mg-dependent methyl migration to produce 3-hydroxy-3-methyl-2-ketobutyrate (HMKB). In the reductase reaction, this 2-ketoacid undergoes a metal-dependent reduction by NADPH to yield (R)-2,3-dihydroxy-isovalerate. This chain is Ketol-acid reductoisomerase (NADP(+)), found in Prochlorococcus marinus (strain MIT 9215).